A 502-amino-acid chain; its full sequence is ATP synthase subunit beta, chloroplastic (502 aa).

Ser-17 carries the phosphoserine modification. 176 to 183 (GGAGVGKT) provides a ligand contact to ATP.

This sequence belongs to the ATPase alpha/beta chains family. As to quaternary structure, F-type ATPases have 2 components, CF(1) - the catalytic core - and CF(0) - the membrane proton channel. CF(1) has five subunits: alpha(3), beta(3), gamma(1), delta(1), epsilon(1). CF(0) has four main subunits: a(1), b(1), b'(1) and c(9-12).

The protein localises to the plastid. The protein resides in the chloroplast thylakoid membrane. The enzyme catalyses ATP + H2O + 4 H(+)(in) = ADP + phosphate + 5 H(+)(out). Produces ATP from ADP in the presence of a proton gradient across the membrane. The catalytic sites are hosted primarily by the beta subunits. The chain is ATP synthase subunit beta, chloroplastic from Lepidium virginicum (Virginia pepperweed).